Consider the following 93-residue polypeptide: Cobalt transport protein CbiN (93 aa).

2 helical membrane-spanning segments follow: residues leucine 5 to glycine 25 and leucine 63 to cysteine 83.

The protein belongs to the CbiN family. As to quaternary structure, forms an energy-coupling factor (ECF) transporter complex composed of an ATP-binding protein (A component, CbiO), a transmembrane protein (T component, CbiQ) and 2 possible substrate-capture proteins (S components, CbiM and CbiN) of unknown stoichimetry.

Its subcellular location is the cell inner membrane. Its pathway is cofactor biosynthesis; adenosylcobalamin biosynthesis. Its function is as follows. Part of the energy-coupling factor (ECF) transporter complex CbiMNOQ involved in cobalt import. In Salmonella newport (strain SL254), this protein is Cobalt transport protein CbiN.